Reading from the N-terminus, the 339-residue chain is Anthranilate phosphoribosyltransferase (339 aa).

5-phospho-alpha-D-ribose 1-diphosphate-binding positions include G81, 84 to 85, S89, 91 to 94, 109 to 117, and A121; these read GD, NVSS, and KHGNRALSS. G81 provides a ligand contact to anthranilate. S93 is a Mg(2+) binding site. N112 lines the anthranilate pocket. R167 contacts anthranilate. Mg(2+) contacts are provided by D225 and E226.

This sequence belongs to the anthranilate phosphoribosyltransferase family. In terms of assembly, homodimer. Mg(2+) serves as cofactor.

The enzyme catalyses N-(5-phospho-beta-D-ribosyl)anthranilate + diphosphate = 5-phospho-alpha-D-ribose 1-diphosphate + anthranilate. The protein operates within amino-acid biosynthesis; L-tryptophan biosynthesis; L-tryptophan from chorismate: step 2/5. Functionally, catalyzes the transfer of the phosphoribosyl group of 5-phosphorylribose-1-pyrophosphate (PRPP) to anthranilate to yield N-(5'-phosphoribosyl)-anthranilate (PRA). This is Anthranilate phosphoribosyltransferase from Brucella canis (strain ATCC 23365 / NCTC 10854 / RM-666).